We begin with the raw amino-acid sequence, 1744 residues long: DNA-directed RNA polymerase I subunit RPA1 (1744 aa).

Residues Cys-56, Cys-69, and His-72 each contribute to the Zn(2+) site. Asp-597, Asp-599, and Asp-601 together coordinate Mg(2+). A bridging helix region spans residues 953-965 (PAEYTIHAMAGRD). The disordered stretch occupies residues 1333 to 1484 (VPREKESGDG…RDGTDWGGTS (152 aa)). Composition is skewed to gly residues over residues 1341 to 1354 (DGSG…GGSG) and 1366 to 1376 (DDGGGPLGGTF). The span at 1464–1478 (RDAEDGGEMQDRDGT) shows a compositional bias: basic and acidic residues.

The protein belongs to the RNA polymerase beta' chain family. As to quaternary structure, component of the RNA polymerase I (Pol I) complex consisting of at least 13 subunits. Post-translationally, phosphorylated.

The protein resides in the nucleus. It is found in the nucleolus. It catalyses the reaction RNA(n) + a ribonucleoside 5'-triphosphate = RNA(n+1) + diphosphate. In terms of biological role, DNA-dependent RNA polymerase catalyzes the transcription of DNA into RNA using the four ribonucleoside triphosphates as substrates. Largest and catalytic core component of RNA polymerase I which synthesizes ribosomal RNA precursors. Forms the polymerase active center together with the second largest subunit. A single stranded DNA template strand of the promoter is positioned within the central active site cleft of Pol I. A bridging helix emanates from RPA1 and crosses the cleft near the catalytic site and is thought to promote translocation of Pol I by acting as a ratchet that moves the RNA-DNA hybrid through the active site by switching from straight to bent conformations at each step of nucleotide addition. In Trypanosoma brucei brucei, this protein is DNA-directed RNA polymerase I subunit RPA1 (TRP11).